The sequence spans 457 residues: Siroheme synthase (457 aa).

The precorrin-2 dehydrogenase /sirohydrochlorin ferrochelatase stretch occupies residues 1–204; the sequence is MDHLPIFCQL…ADEKAVNATT (204 aa). NAD(+)-binding positions include 22 to 23 and 43 to 44; these read DV and LT. At S128 the chain carries Phosphoserine. The tract at residues 216 to 457 is uroporphyrinogen-III C-methyltransferase; that stretch reads GEVVLVGAGP…RDKLNWFSNH (242 aa). P225 lines the S-adenosyl-L-methionine pocket. D248 functions as the Proton acceptor in the catalytic mechanism. The active-site Proton donor is K270. S-adenosyl-L-methionine is bound by residues 301 to 303, I306, 331 to 332, M382, and G411; these read GGD and TA.

This sequence in the N-terminal section; belongs to the precorrin-2 dehydrogenase / sirohydrochlorin ferrochelatase family. The protein in the C-terminal section; belongs to the precorrin methyltransferase family.

It carries out the reaction uroporphyrinogen III + 2 S-adenosyl-L-methionine = precorrin-2 + 2 S-adenosyl-L-homocysteine + H(+). The catalysed reaction is precorrin-2 + NAD(+) = sirohydrochlorin + NADH + 2 H(+). The enzyme catalyses siroheme + 2 H(+) = sirohydrochlorin + Fe(2+). It participates in cofactor biosynthesis; adenosylcobalamin biosynthesis; precorrin-2 from uroporphyrinogen III: step 1/1. It functions in the pathway cofactor biosynthesis; adenosylcobalamin biosynthesis; sirohydrochlorin from precorrin-2: step 1/1. The protein operates within porphyrin-containing compound metabolism; siroheme biosynthesis; precorrin-2 from uroporphyrinogen III: step 1/1. Its pathway is porphyrin-containing compound metabolism; siroheme biosynthesis; siroheme from sirohydrochlorin: step 1/1. It participates in porphyrin-containing compound metabolism; siroheme biosynthesis; sirohydrochlorin from precorrin-2: step 1/1. Functionally, multifunctional enzyme that catalyzes the SAM-dependent methylations of uroporphyrinogen III at position C-2 and C-7 to form precorrin-2 via precorrin-1. Then it catalyzes the NAD-dependent ring dehydrogenation of precorrin-2 to yield sirohydrochlorin. Finally, it catalyzes the ferrochelation of sirohydrochlorin to yield siroheme. The protein is Siroheme synthase of Salmonella schwarzengrund (strain CVM19633).